A 218-amino-acid polypeptide reads, in one-letter code: Pyridoxine/pyridoxamine 5'-phosphate oxidase (218 aa).

Substrate-binding positions include 11–14 (RVEY) and K75. FMN is bound by residues 70–75 (RTVLCK), 85–86 (YT), K92, and Q114. Residues Y132, R136, and S140 each contribute to the substrate site. FMN contacts are provided by residues 149 to 150 (QS) and W195. 201 to 203 (RVH) is a substrate binding site. R205 lines the FMN pocket.

It belongs to the pyridoxamine 5'-phosphate oxidase family. In terms of assembly, homodimer. FMN serves as cofactor.

The catalysed reaction is pyridoxamine 5'-phosphate + O2 + H2O = pyridoxal 5'-phosphate + H2O2 + NH4(+). The enzyme catalyses pyridoxine 5'-phosphate + O2 = pyridoxal 5'-phosphate + H2O2. The protein operates within cofactor metabolism; pyridoxal 5'-phosphate salvage; pyridoxal 5'-phosphate from pyridoxamine 5'-phosphate: step 1/1. It participates in cofactor metabolism; pyridoxal 5'-phosphate salvage; pyridoxal 5'-phosphate from pyridoxine 5'-phosphate: step 1/1. In terms of biological role, catalyzes the oxidation of either pyridoxine 5'-phosphate (PNP) or pyridoxamine 5'-phosphate (PMP) into pyridoxal 5'-phosphate (PLP). This Mycolicibacterium gilvum (strain PYR-GCK) (Mycobacterium gilvum (strain PYR-GCK)) protein is Pyridoxine/pyridoxamine 5'-phosphate oxidase.